The sequence spans 118 residues: UPF0449 protein C19orf25 (118 aa).

The residue at position 63 (tyrosine 63) is a Phosphotyrosine. A coiled-coil region spans residues 81–109 (NVLRQRCELLQRAGEDLEREVAQMKQAAL).

This sequence belongs to the UPF0449 family.

This is UPF0449 protein C19orf25 (C19orf25) from Homo sapiens (Human).